The primary structure comprises 79 residues: Acyl carrier protein (79 aa).

The Carrier domain occupies 2-77 (ENIEQRVKKI…QAIDYVNAHL (76 aa)). Ser-37 carries the O-(pantetheine 4'-phosphoryl)serine modification.

It belongs to the acyl carrier protein (ACP) family. 4'-phosphopantetheine is transferred from CoA to a specific serine of apo-ACP by AcpS. This modification is essential for activity because fatty acids are bound in thioester linkage to the sulfhydryl of the prosthetic group.

It localises to the cytoplasm. The protein operates within lipid metabolism; fatty acid biosynthesis. Carrier of the growing fatty acid chain in fatty acid biosynthesis. The chain is Acyl carrier protein from Azoarcus sp. (strain BH72).